Reading from the N-terminus, the 296-residue chain is MSMLPTFGFTQEQVACVCEVLQQGGNIERLGRFLWSLPACEHLHKNESVLKAKAVVAFHRGNFRELYKILESHQFSPHNHAKLQQLWLKAHYIEAEKLRGRPLGAVGKYRVRRKFPLPRSIWDGEETSYCFKEKSRSVLREWYAHNPYPSPREKRELAEATGLTTTQVSNWFKNRRQRDRAAEAKERENSENSNSSSHNPLASSLNGSGKSVLGSSEDEKTPSGTPDHSSSSPALLLSPPPPPGLPSLHSLGHPPGPSAVPVPVPGGGGADPLQHHHSLQDSILNPMSANLVDLGS.

The homeobox DNA-binding region spans 124–183 (GEETSYCFKEKSRSVLREWYAHNPYPSPREKRELAEATGLTTTQVSNWFKNRRQRDRAAE). The disordered stretch occupies residues 168–284 (VSNWFKNRRQ…HHHSLQDSIL (117 aa)). Residues 179–190 (DRAAEAKERENS) are compositionally biased toward basic and acidic residues. Composition is skewed to low complexity over residues 191–206 (ENSNSSSHNPLASSLN) and 228–237 (HSSSSPALLL). Residues 254-264 (PPGPSAVPVPV) are compositionally biased toward pro residues.

This sequence belongs to the SIX/Sine oculis homeobox family. As to quaternary structure, interacts with TCF7L2; in a canonical Wnt signaling independent manner; prevents transcription of differentiation genes in cap mesenchyme. Interacts with OSR1; form a strong repressor complex with TCF7L2, TLE2 and TLE3 to prevent the activation of Wnt/beta-catenin target genes in the cap mesenchyme. Interacts with HOXA11, EYA1 and EYA3. As to expression, expressed in phalangeal tendons, in smooth muscle and in head and body mesenchyme.

Its subcellular location is the nucleus. In terms of biological role, transcription factor that plays an important role in the development of several organs, including kidney, skull and stomach. During kidney development, maintains cap mesenchyme multipotent nephron progenitor cells in an undifferentiated state by opposing the inductive signals emanating from the ureteric bud and cooperates with WNT9B to promote renewing progenitor cells proliferation. Acts through its interaction with TCF7L2 and OSR1 in a canonical Wnt signaling independent manner preventing transcription of differentiation genes in cap mesenchyme such as WNT4. Also acts independently of OSR1 to activate expression of many cap mesenchyme genes, including itself, GDNF and OSR1. During craniofacial development plays a role in growth and elongation of the cranial base through regulation of chondrocyte differentiation. During stomach organogenesis, controls pyloric sphincter formation and mucosal growth through regulation of a gene network including NKX2-5, BMPR1B, BMP4, SOX9 and GREM1. During branchial arch development, acts to mediate HOXA2 control over the insulin-like growth factor pathway. May also be involved in limb tendon and ligament development. Plays a role in cell proliferation and migration. The polypeptide is Homeobox protein SIX2 (Six2) (Mus musculus (Mouse)).